Reading from the N-terminus, the 366-residue chain is ATPase ASNA1 homolog (366 aa).

33–40 (KGGVGKTT) is a binding site for ATP. Asp62 is an active-site residue. Residues Glu234 and Asn261 each contribute to the ATP site.

This sequence belongs to the arsA ATPase family. As to quaternary structure, homodimer.

It localises to the cytoplasm. The protein localises to the endoplasmic reticulum. ATPase required for the post-translational delivery of tail-anchored (TA) proteins to the endoplasmic reticulum. Recognizes and selectively binds the transmembrane domain of TA proteins in the cytosol. This complex then targets to the endoplasmic reticulum by membrane-bound receptors, where the tail-anchored protein is released for insertion. This process is regulated by ATP binding and hydrolysis. ATP binding drives the homodimer towards the closed dimer state, facilitating recognition of newly synthesized TA membrane proteins. ATP hydrolysis is required for insertion. Subsequently, the homodimer reverts towards the open dimer state, lowering its affinity for the membrane-bound receptor, and returning it to the cytosol to initiate a new round of targeting. This chain is ATPase ASNA1 homolog, found in Cryptosporidium parvum (strain Iowa II).